The chain runs to 207 residues: MQVHVVDHPLAAARLTTLRDERTDNAGFRAALRELTLLLIYEATRDAPCEPVPIRTPLAETVGSRLTKPPLLVPVLRAGLGMVDEAHAALPEAHVGFVGVARDEQTHQPVPYLDSLPDDLTDVPVMVLDPMVATGGSMTHTLGLLISRGAADITVLCVVAAPEGIAALQKAAPNVRLFTAAIDEGLNEVAYIVPGLGDAGDRQFGPR.

Residues R77, R102, and 129 to 137 contribute to the 5-phospho-alpha-D-ribose 1-diphosphate site; that span reads DPMVATGGS. Residues I192 and 197 to 199 each bind uracil; that span reads GDA. D198 provides a ligand contact to 5-phospho-alpha-D-ribose 1-diphosphate.

It belongs to the UPRTase family. Mg(2+) serves as cofactor.

It carries out the reaction UMP + diphosphate = 5-phospho-alpha-D-ribose 1-diphosphate + uracil. It participates in pyrimidine metabolism; UMP biosynthesis via salvage pathway; UMP from uracil: step 1/1. Allosterically activated by GTP. Functionally, catalyzes the conversion of uracil and 5-phospho-alpha-D-ribose 1-diphosphate (PRPP) to UMP and diphosphate. The sequence is that of Uracil phosphoribosyltransferase from Mycobacterium bovis (strain ATCC BAA-935 / AF2122/97).